Here is a 457-residue protein sequence, read N- to C-terminus: MALWGGRFSQAADQRFKSFNDSLRFDYRLTEQDIVGSVAWSRALVTVGVLSETEQQQLEDALNVTLEEVRTAPEAILASDAEDIHSWVEQCLIDKVGDLGKKLHTGRSRNDQVATDLKLWCRAQVTELLGAIHLLQQALVMTAEAHQDVVMPGYTHLQRAQPITFAHWCLAYSEMLARDESRLRDTLTRLDVSPLGAGALAGTAYAIDRDKLAGWLGFASATRNSLDSVSDRDHVLELLSYAAIGMVHLSRFAEDLIFFNTGEAGFIELSDRVTSGSSLMPQKKNPDALELIRGKCGRVQGALTGMMMTLKGLPLAYNKDMQEDKEGLFDALDTWLDCLHMAALVLDGIQLKSPRCREAAQQGYANATELADYLVARGIPFREAHHIVGEAVVEAIRQGVPLETLPLARLQAFSPVIDEDVYPVLALASCLAQRKAKGGVAPEQIAQAIAEAKQRLA.

This sequence belongs to the lyase 1 family. Argininosuccinate lyase subfamily.

The protein resides in the cytoplasm. It catalyses the reaction 2-(N(omega)-L-arginino)succinate = fumarate + L-arginine. The protein operates within amino-acid biosynthesis; L-arginine biosynthesis; L-arginine from L-ornithine and carbamoyl phosphate: step 3/3. The chain is Argininosuccinate lyase from Sodalis glossinidius (strain morsitans).